The chain runs to 149 residues: Cell division protein SepF (149 aa).

The protein belongs to the SepF family. As to quaternary structure, homodimer. Interacts with FtsZ.

The protein resides in the cytoplasm. In terms of biological role, cell division protein that is part of the divisome complex and is recruited early to the Z-ring. Probably stimulates Z-ring formation, perhaps through the cross-linking of FtsZ protofilaments. Its function overlaps with FtsA. The polypeptide is Cell division protein SepF (Clostridium perfringens (strain ATCC 13124 / DSM 756 / JCM 1290 / NCIMB 6125 / NCTC 8237 / Type A)).